The chain runs to 153 residues: Ribosome maturation factor RimP (153 aa).

This sequence belongs to the RimP family.

The protein resides in the cytoplasm. Functionally, required for maturation of 30S ribosomal subunits. In Marinomonas sp. (strain MWYL1), this protein is Ribosome maturation factor RimP.